Consider the following 507-residue polypeptide: ATP synthase subunit alpha, mitochondrial (507 aa).

171 to 178 is a binding site for ATP; it reads GDRQTGKT.

The protein belongs to the ATPase alpha/beta chains family. F-type ATPases have 2 components, CF(1) - the catalytic core - and CF(0) - the membrane proton channel. CF(1) has five subunits: alpha(3), beta(3), gamma(1), delta(1), epsilon(1). CF(0) has three main subunits: a, b and c.

It is found in the mitochondrion. Its subcellular location is the mitochondrion inner membrane. Its function is as follows. Mitochondrial membrane ATP synthase (F(1)F(0) ATP synthase or Complex V) produces ATP from ADP in the presence of a proton gradient across the membrane which is generated by electron transport complexes of the respiratory chain. F-type ATPases consist of two structural domains, F(1) - containing the extramembraneous catalytic core, and F(0) - containing the membrane proton channel, linked together by a central stalk and a peripheral stalk. During catalysis, ATP synthesis in the catalytic domain of F(1) is coupled via a rotary mechanism of the central stalk subunits to proton translocation. Subunits alpha and beta form the catalytic core in F(1). Rotation of the central stalk against the surrounding alpha(3)beta(3) subunits leads to hydrolysis of ATP in three separate catalytic sites on the beta subunits. Subunit alpha does not bear the catalytic high-affinity ATP-binding sites. The protein is ATP synthase subunit alpha, mitochondrial (ATPA) of Raphanus sativus (Radish).